Reading from the N-terminus, the 669-residue chain is DNA ligase (669 aa).

NAD(+)-binding positions include 33 to 37 (DLTYD), 82 to 83 (SL), and Glu-115. The active-site N6-AMP-lysine intermediate is Lys-117. NAD(+)-binding residues include Arg-138, Glu-172, Lys-286, and Lys-310. Positions 401, 404, 417, and 422 each coordinate Zn(2+).

The protein belongs to the NAD-dependent DNA ligase family. LigA subfamily. It depends on Mg(2+) as a cofactor. Mn(2+) serves as cofactor.

It catalyses the reaction NAD(+) + (deoxyribonucleotide)n-3'-hydroxyl + 5'-phospho-(deoxyribonucleotide)m = (deoxyribonucleotide)n+m + AMP + beta-nicotinamide D-nucleotide.. DNA ligase that catalyzes the formation of phosphodiester linkages between 5'-phosphoryl and 3'-hydroxyl groups in double-stranded DNA using NAD as a coenzyme and as the energy source for the reaction. It is essential for DNA replication and repair of damaged DNA. This chain is DNA ligase, found in Borrelia hermsii (strain HS1 / DAH).